We begin with the raw amino-acid sequence, 179 residues long: Putative FBD-associated F-box protein At3g12840 (179 aa).

Residues 14–60 (AARINDLPDDLLATVLSFVPTKDAVATSILSKRWRPIWKRAVNLESD) form the F-box domain. The FBD domain maps to 101–152 (KWKQPDFVPLSLYRSLEAFEWIGFKGREKTEKKAAFHILRNACNLKTMAITT).

This is Putative FBD-associated F-box protein At3g12840 from Arabidopsis thaliana (Mouse-ear cress).